The chain runs to 779 residues: Glutathione biosynthesis bifunctional protein GshAB (779 aa).

The segment at 1–346 (MAFSKNILDS…ETANRNQEQA (346 aa)) is glutamate--cysteine ligase. The 257-residue stretch at 512 to 768 (KKILDQAGIN…LDDKILDALG (257 aa)) folds into the ATP-grasp domain. 539–597 (PYYRGRAIVIKPKSTNFGIGITIIKENNRHDFFAQGIAQAFKHEATVLIENFSSGKEYR) is a binding site for ATP. Residues aspartate 719, glutamate 738, and asparagine 740 each coordinate Mg(2+). Aspartate 719, glutamate 738, and asparagine 740 together coordinate Mn(2+).

It in the N-terminal section; belongs to the glutamate--cysteine ligase type 1 family. Type 2 subfamily. In terms of assembly, monomer. It depends on Mg(2+) as a cofactor. Mn(2+) serves as cofactor.

The enzyme catalyses L-cysteine + L-glutamate + ATP = gamma-L-glutamyl-L-cysteine + ADP + phosphate + H(+). It carries out the reaction gamma-L-glutamyl-L-cysteine + glycine + ATP = glutathione + ADP + phosphate + H(+). It functions in the pathway sulfur metabolism; glutathione biosynthesis; glutathione from L-cysteine and L-glutamate: step 1/2. It participates in sulfur metabolism; glutathione biosynthesis; glutathione from L-cysteine and L-glutamate: step 2/2. In terms of biological role, synthesizes glutathione from L-glutamate and L-cysteine via gamma-L-glutamyl-L-cysteine. This chain is Glutathione biosynthesis bifunctional protein GshAB, found in Desulfotalea psychrophila (strain LSv54 / DSM 12343).